The sequence spans 239 residues: Acyl-protein thioesterase 1 (239 aa).

Active-site charge relay system residues include S124, D180, and H213.

It belongs to the AB hydrolase superfamily. AB hydrolase 2 family.

The protein localises to the cytoplasm. The protein resides in the nucleus. The enzyme catalyses S-hexadecanoyl-L-cysteinyl-[protein] + H2O = L-cysteinyl-[protein] + hexadecanoate + H(+). Functionally, hydrolyzes fatty acids from S-acylated cysteine residues in proteins with a strong preference for palmitoylated G-alpha proteins over other acyl substrates. Mediates the deacylation of G-alpha proteins such as GPA1 in vivo, but has weak or no activity toward palmitoylated Ras proteins. Has weak lysophospholipase activity in vitro; however such activity may not exist in vivo. This is Acyl-protein thioesterase 1 from Emericella nidulans (strain FGSC A4 / ATCC 38163 / CBS 112.46 / NRRL 194 / M139) (Aspergillus nidulans).